The primary structure comprises 436 residues: 3-hydroxy-3-methylglutaryl-coenzyme A reductase (436 aa).

Active-site charge relay system residues include Glu99, Lys277, and Asp293. Catalysis depends on His390, which acts as the Proton donor.

This sequence belongs to the HMG-CoA reductase family.

The enzyme catalyses (R)-mevalonate + 2 NADP(+) + CoA = (3S)-3-hydroxy-3-methylglutaryl-CoA + 2 NADPH + 2 H(+). Its pathway is metabolic intermediate biosynthesis; (R)-mevalonate biosynthesis; (R)-mevalonate from acetyl-CoA: step 3/3. Functionally, converts HMG-CoA to mevalonate. In Archaeoglobus fulgidus (strain ATCC 49558 / DSM 4304 / JCM 9628 / NBRC 100126 / VC-16), this protein is 3-hydroxy-3-methylglutaryl-coenzyme A reductase (hmgA).